Reading from the N-terminus, the 353-residue chain is Chemerin-like receptor 2 (353 aa).

At 1 to 41 (MEVSREMLFEELDNYSYALEYYSQEPDAEENVYPGIVHWIS) the chain is on the extracellular side. Asn-14 carries an N-linked (GlcNAc...) asparagine glycan. The chain crosses the membrane as a helical span at residues 42–62 (LLLYALAFVLGIPGNAIVIWF). The Cytoplasmic segment spans residues 63 to 73 (MGFKWKKTVTT). A helical membrane pass occupies residues 74–94 (LWFLNLAIADFVFVLFLPLYI). The Extracellular segment spans residues 95-112 (SYVALSFHWPFGRWLCKL). A disulfide bridge links Cys-110 with Cys-187. Residues 113–133 (NSFIAQLNMFSSVFFLTVISL) traverse the membrane as a helical segment. Over 134-154 (DRYIHLIHPGLSHPHRTLKNS) the chain is Cytoplasmic. Residues 155-175 (LLVVLFVWLLASLLGGPTLYF) traverse the membrane as a helical segment. Residues 176 to 210 (RDTVEVNNRIICYNNFQEYELTLMRHHVLTWVKFL) are Extracellular-facing. Residues 211-231 (FGYLLPLLTMSSCYLCLIFKT) form a helical membrane-spanning segment. The Cytoplasmic portion of the chain corresponds to 232-247 (KKQNILISSKHLWMIL). Residues 248–268 (SVVIAFMVCWTPFHLFSIWEL) traverse the membrane as a helical segment. Residues 269 to 286 (SIHHNSSFQNVLQGGIPL) lie on the Extracellular side of the membrane. A helical membrane pass occupies residues 287–307 (STGLAFLNSCLNPILYVLISK). Topologically, residues 308 to 353 (KFQARFRASVAEVLKRSLWEASCSGTVSEQLRSAETKSLSLLETAQ) are cytoplasmic.

Belongs to the chemokine-like receptor (CMKLR) family.

The protein localises to the cell membrane. Functionally, receptor for chemoattractant adipokine chemerin/RARRES2 suggesting a role for this receptor in the regulation of inflammation and energy homesotasis. Signals mainly via beta-arrestin pathway. Binding of RARRES2 activates weakly G proteins, calcium mobilization and MAPK1/MAPK3 (ERK1/2) phosphorylation too. Acts also as a receptor for TAFA1, mediates its effects on neuronal stem-cell proliferation and differentiation via the activation of ROCK/ERK and ROCK/STAT3 signaling pathway. This Rattus norvegicus (Rat) protein is Chemerin-like receptor 2 (Cmklr2).